Here is a 178-residue protein sequence, read N- to C-terminus: Dual-action ribosomal maturation protein DarP (178 aa).

This sequence belongs to the DarP family.

It is found in the cytoplasm. Member of a network of 50S ribosomal subunit biogenesis factors which assembles along the 30S-50S interface, preventing incorrect 23S rRNA structures from forming. Promotes peptidyl transferase center (PTC) maturation. This Haemophilus influenzae (strain PittEE) protein is Dual-action ribosomal maturation protein DarP.